A 187-amino-acid chain; its full sequence is MRRLSSQLMCTAAAVRFASAGGAKKYDLFGYEVDTNTAPWIEKVKKCRYYDEAGEVLVSMNVKNCPPDLETYNATLQKIFEAPSKQEKPVENESKFCAMMDLMEEMQHRNKVKPNEESWTWVMKECVQSGQFRLGYCVAKLMEAEFKRVPEDLVKQNEANAAKAKADGKEHPSTLAQQQSLFDIKIQ.

The N-terminal 17 residues, 1-17 (MRRLSSQLMCTAAAVRF), are a transit peptide targeting the mitochondrion. Residues 160–187 (NAAKAKADGKEHPSTLAQQQSLFDIKIQ) form a disordered region.

The protein localises to the mitochondrion inner membrane. Its function is as follows. Putative RNA-binding protein. The protein is Protein P18, mitochondrial of Leishmania tarentolae (Sauroleishmania tarentolae).